We begin with the raw amino-acid sequence, 348 residues long: VIP36-like protein (348 aa).

An N-terminal signal peptide occupies residues 1 to 44; the sequence is MAATLGPLGSWQQWRRCLSARDGSRMLLLLLLLGSGQGPQQVGA. At 45–313 the chain is on the lumenal side; sequence GQTFEYLKRE…APLPPLSGLA (269 aa). The 226-residue stretch at 49–274 folds into the L-type lectin-like domain; sequence EYLKREHSLS…DVISLKLFEL (226 aa). A carbohydrate-binding residues include serine 93 and aspartate 128. Ca(2+) contacts are provided by aspartate 159, tyrosine 161, and asparagine 163. Position 161–163 (161–163) interacts with a carbohydrate; sequence YPN. The N-linked (GlcNAc...) (high mannose) asparagine glycan is linked to asparagine 181. Histidine 188 provides a ligand contact to a carbohydrate. Aspartate 191 contributes to the Ca(2+) binding site. Cysteines 200 and 237 form a disulfide. Residue 258–260 coordinates a carbohydrate; sequence GDL. The helical transmembrane segment at 314–336 threads the bilayer; sequence LFLIVFFSLVFSVFAIVIGIILY. The Cytoplasmic portion of the chain corresponds to 337 to 348; it reads NKWQEQSRKRFY. Residues 344 to 346 carry the Endoplasmic reticulum retention signal motif; sequence RKR.

As to expression, expressed in numerous tissues. Highest expression in skeletal muscle and kidney, intermediate levels in heart, liver and placenta, low levels in brain, thymus, spleen, small intestine and lung.

The protein localises to the endoplasmic reticulum membrane. Its subcellular location is the golgi apparatus membrane. In terms of biological role, may be involved in the regulation of export from the endoplasmic reticulum of a subset of glycoproteins. May function as a regulator of ERGIC-53. This Homo sapiens (Human) protein is VIP36-like protein (LMAN2L).